The following is a 128-amino-acid chain: Ferric uptake regulation protein homolog (128 aa).

Belongs to the Fur family.

The polypeptide is Ferric uptake regulation protein homolog (Archaeoglobus fulgidus (strain ATCC 49558 / DSM 4304 / JCM 9628 / NBRC 100126 / VC-16)).